Consider the following 170-residue polypeptide: MALLPILEFPDPRLRTKAALIEAAEVTTPAFQELIDNMFLTMYDAPGIGLAATQVDVHKRFMVIDVSEEKNEPHVFINPEIVAKDGGRVYQEGCLSVPGIFADVTRADTITVKYLDRNGQEQQMEAGDVLATCIQHEMDHLDGKLFIDYLSPLKREMVRKKLAKQRKHVA.

The Fe cation site is built by Cys94 and His136. Glu137 is a catalytic residue. His140 contacts Fe cation.

The protein belongs to the polypeptide deformylase family. It depends on Fe(2+) as a cofactor.

The catalysed reaction is N-terminal N-formyl-L-methionyl-[peptide] + H2O = N-terminal L-methionyl-[peptide] + formate. Functionally, removes the formyl group from the N-terminal Met of newly synthesized proteins. Requires at least a dipeptide for an efficient rate of reaction. N-terminal L-methionine is a prerequisite for activity but the enzyme has broad specificity at other positions. In Stenotrophomonas maltophilia (strain K279a), this protein is Peptide deformylase.